The following is a 467-amino-acid chain: Methylenetetrahydrofolate--tRNA-(uracil-5-)-methyltransferase TrmFO (467 aa).

An FAD-binding site is contributed by 10-15 (GGGMAG).

Belongs to the MnmG family. TrmFO subfamily. Requires FAD as cofactor.

It localises to the cytoplasm. It carries out the reaction uridine(54) in tRNA + (6R)-5,10-methylene-5,6,7,8-tetrahydrofolate + NADH + H(+) = 5-methyluridine(54) in tRNA + (6S)-5,6,7,8-tetrahydrofolate + NAD(+). The catalysed reaction is uridine(54) in tRNA + (6R)-5,10-methylene-5,6,7,8-tetrahydrofolate + NADPH + H(+) = 5-methyluridine(54) in tRNA + (6S)-5,6,7,8-tetrahydrofolate + NADP(+). Functionally, catalyzes the folate-dependent formation of 5-methyl-uridine at position 54 (M-5-U54) in all tRNAs. The polypeptide is Methylenetetrahydrofolate--tRNA-(uracil-5-)-methyltransferase TrmFO (Hyphomonas neptunium (strain ATCC 15444)).